The chain runs to 152 residues: Large ribosomal subunit protein bL9 (152 aa).

The protein belongs to the bacterial ribosomal protein bL9 family.

Functionally, binds to the 23S rRNA. The sequence is that of Large ribosomal subunit protein bL9 from Mycobacterium marinum (strain ATCC BAA-535 / M).